The chain runs to 194 residues: Mpv17-like protein (194 aa).

Topologically, residues 1-14 (MASWWRAFPQAARR) are cytoplasmic. A helical transmembrane segment spans residues 15–34 (YPWPTNVLLYAGLFSAGDAL). Positions 16–55 (PWPTNVLLYAGLFSAGDALQQRLRGGPADWRQTRRVATLA) are targeting to peroxisomes. Residues 35 to 50 (QQRLRGGPADWRQTRR) lie on the Lumenal side of the membrane. A helical membrane pass occupies residues 51 to 67 (VATLAVTFHGNFNYVWL). The Cytoplasmic segment spans residues 68 to 91 (RLLERALPGRAPRTVLAKVLCDQT). A helical transmembrane segment spans residues 92–110 (VGGPIALSAFYVGMSVLQG). Topologically, residues 111–150 (KDDIFLDLKQKFWNTYKSGLMYWPFVQLTNFSLVPVHWRT) are lumenal. Residues 151–168 (AYTGLCAFLWATFLCFSQ) form a helical membrane-spanning segment. Residues 169 to 194 (QSGDGTLQSIFIFLRRKEASDKSPEK) are Cytoplasmic-facing.

This sequence belongs to the peroxisomal membrane protein PXMP2/4 family. As to expression, isoform 1 and isoform 3 are expressed in the kidney (at protein level). Isoform 1 is expressed in the kidney, spleen, heart, brain, lung and liver. Isoform 3 is expressed in the kidney. Isoform 1 and isoform 3 expression increase during development, reache their highest level in adulthood and decrease with aging.

The protein resides in the peroxisome membrane. The protein localises to the cytoplasm. In terms of biological role, participates in reactive oxygen species metabolism by up- or down-regulation of the genes of antioxidant enzymes. Protective against the mitochondrial apoptotic cascade. Functionally, participates in reactive oxygen species metabolism by up- or down-regulation of the genes of antioxidant enzymes. This chain is Mpv17-like protein (Mpv17l), found in Mus musculus (Mouse).